Here is a 572-residue protein sequence, read N- to C-terminus: Oxygen-dependent choline dehydrogenase (572 aa).

Residue 9-38 coordinates FAD; that stretch reads DYVIIGGGSAGSVLGARLSEDKDKNVLVLE. The active-site Proton acceptor is histidine 477.

This sequence belongs to the GMC oxidoreductase family. Requires FAD as cofactor.

The enzyme catalyses choline + A = betaine aldehyde + AH2. It catalyses the reaction betaine aldehyde + NAD(+) + H2O = glycine betaine + NADH + 2 H(+). It functions in the pathway amine and polyamine biosynthesis; betaine biosynthesis via choline pathway; betaine aldehyde from choline (cytochrome c reductase route): step 1/1. Involved in the biosynthesis of the osmoprotectant glycine betaine. Catalyzes the oxidation of choline to betaine aldehyde and betaine aldehyde to glycine betaine at the same rate. The protein is Oxygen-dependent choline dehydrogenase of Staphylococcus epidermidis (strain ATCC 12228 / FDA PCI 1200).